The following is a 283-amino-acid chain: Peroxisome biogenesis protein 22 (283 aa).

At Ala-2 the chain carries N-acetylalanine. A helical transmembrane segment spans residues 45-62; it reads IGAIAGLAIAVIFTWRAI. Residues 66-107 are disordered; it reads GEQRQRRQPKRRIHNAETSSAAAAASQSNLASSVAPEVSSPR. Over residues 81–100 the composition is skewed to low complexity; that stretch reads AETSSAAAAASQSNLASSVA.

The protein belongs to the peroxin-22 family. Interacts with PEX4.

The protein localises to the peroxisome membrane. Functionally, may be tethered PEX4 to the peroxisome membrane and may be involved in a late step of the matrix protein import. Does not play a role in the biogenesis of the peroxisomal membrane. The sequence is that of Peroxisome biogenesis protein 22 (PEX22) from Arabidopsis thaliana (Mouse-ear cress).